The chain runs to 145 residues: Small ribosomal subunit protein uS12 (145 aa).

The protein belongs to the universal ribosomal protein uS12 family. In terms of assembly, component of the small ribosomal subunit. Mature ribosomes consist of a small (40S) and a large (60S) subunit. The 40S subunit contains about 32 different proteins and 1 molecule of RNA (18S). The 60S subunit contains 45 different proteins and 3 molecules of RNA (25S, 5.8S and 5S).

It is found in the cytoplasm. Functionally, component of the ribosome, a large ribonucleoprotein complex responsible for the synthesis of proteins in the cell. The small ribosomal subunit (SSU) binds messenger RNAs (mRNAs) and translates the encoded message by selecting cognate aminoacyl-transfer RNA (tRNA) molecules. The large subunit (LSU) contains the ribosomal catalytic site termed the peptidyl transferase center (PTC), which catalyzes the formation of peptide bonds, thereby polymerizing the amino acids delivered by tRNAs into a polypeptide chain. The nascent polypeptides leave the ribosome through a tunnel in the LSU and interact with protein factors that function in enzymatic processing, targeting, and the membrane insertion of nascent chains at the exit of the ribosomal tunnel. The sequence is that of Small ribosomal subunit protein uS12 (RPS23A) from Candida albicans (strain SC5314 / ATCC MYA-2876) (Yeast).